A 133-amino-acid chain; its full sequence is Large ribosomal subunit protein eL32y (133 aa).

The protein belongs to the eukaryotic ribosomal protein eL32 family.

This is Large ribosomal subunit protein eL32y (RPL32B) from Arabidopsis thaliana (Mouse-ear cress).